The primary structure comprises 937 residues: Aconitate hydratase A (937 aa).

A disordered region spans residues 410-450; the sequence is MANEGGFQPGSTSDLDNYNASWPGEGESAAANAEGRPSNPV. Over residues 418 to 429 the composition is skewed to polar residues; it reads PGSTSDLDNYNA. Residues 433–444 are compositionally biased toward low complexity; sequence GEGESAAANAEG. Residues Cys-475, Cys-541, and Cys-544 each contribute to the [4Fe-4S] cluster site.

The protein belongs to the aconitase/IPM isomerase family. Monomer. [4Fe-4S] cluster serves as cofactor.

The enzyme catalyses citrate = D-threo-isocitrate. It catalyses the reaction (2S,3R)-3-hydroxybutane-1,2,3-tricarboxylate = 2-methyl-cis-aconitate + H2O. The protein operates within carbohydrate metabolism; tricarboxylic acid cycle; isocitrate from oxaloacetate: step 2/2. It functions in the pathway organic acid metabolism; propanoate degradation. Involved in the catabolism of short chain fatty acids (SCFA) via the tricarboxylic acid (TCA)(acetyl degradation route) and probably via the 2-methylcitrate cycle I (propionate degradation route). Catalyzes the reversible isomerization of citrate to isocitrate via cis-aconitate. Could catalyze the hydration of 2-methyl-cis-aconitate to yield (2R,3S)-2-methylisocitrate. The apo form of AcnA functions as a RNA-binding regulatory protein. This is Aconitate hydratase A (acn) from Corynebacterium efficiens (strain DSM 44549 / YS-314 / AJ 12310 / JCM 11189 / NBRC 100395).